Here is a 319-residue protein sequence, read N- to C-terminus: ATP-dependent 6-phosphofructokinase (319 aa).

Gly11 contacts ATP. Residue 21 to 25 (RAVVR) participates in ADP binding. ATP-binding positions include 72–73 (RC) and 102–105 (GDGS). Position 103 (Asp103) interacts with Mg(2+). Residue 125 to 127 (TID) coordinates substrate. The active-site Proton acceptor is Asp127. ADP is bound at residue Arg154. Residues Arg162 and 169-171 (MGR) each bind substrate. ADP-binding positions include 185–187 (GAE), Arg211, and 213–215 (KKH). Substrate contacts are provided by residues Glu222, Arg243, and 249–252 (HVQR).

This sequence belongs to the phosphofructokinase type A (PFKA) family. ATP-dependent PFK group I subfamily. Prokaryotic clade 'B1' sub-subfamily. As to quaternary structure, homotetramer. Requires Mg(2+) as cofactor.

It is found in the cytoplasm. It catalyses the reaction beta-D-fructose 6-phosphate + ATP = beta-D-fructose 1,6-bisphosphate + ADP + H(+). It functions in the pathway carbohydrate degradation; glycolysis; D-glyceraldehyde 3-phosphate and glycerone phosphate from D-glucose: step 3/4. With respect to regulation, allosterically activated by ADP and other diphosphonucleosides, and allosterically inhibited by phosphoenolpyruvate. In terms of biological role, catalyzes the phosphorylation of D-fructose 6-phosphate to fructose 1,6-bisphosphate by ATP, the first committing step of glycolysis. In Geobacillus sp. (strain WCH70), this protein is ATP-dependent 6-phosphofructokinase.